A 506-amino-acid chain; its full sequence is Histidine ammonia-lyase (506 aa).

Positions 144 to 146 form a cross-link, 5-imidazolinone (Ala-Gly); the sequence is ASG. At Ser-145 the chain carries 2,3-didehydroalanine (Ser).

The protein belongs to the PAL/histidase family. In terms of processing, contains an active site 4-methylidene-imidazol-5-one (MIO), which is formed autocatalytically by cyclization and dehydration of residues Ala-Ser-Gly.

The protein localises to the cytoplasm. It carries out the reaction L-histidine = trans-urocanate + NH4(+). It functions in the pathway amino-acid degradation; L-histidine degradation into L-glutamate; N-formimidoyl-L-glutamate from L-histidine: step 1/3. This Legionella pneumophila (strain Paris) protein is Histidine ammonia-lyase.